We begin with the raw amino-acid sequence, 76 residues long: Alpha/kappa-conotoxin pl14a (76 aa).

The first 24 residues, 1-24 (MPSVRSVTCCCLLWMMFSVQLVTP), serve as a signal peptide directing secretion. A propeptide spanning residues 25–39 (GSPGTAQLSGHRTAR) is cleaved from the precursor. 2 disulfides stabilise this stretch: C46/C61 and C50/C63. R64 bears the Arginine amide mark. A propeptide spanning residues 65–76 (GKRDAVSSSMAV) is cleaved from the precursor.

The protein belongs to the conotoxin J superfamily. In terms of tissue distribution, expressed by the venom duct.

The protein localises to the secreted. In terms of biological role, highly inhibits both nicotinic acetylcholine receptors (neuronal (IC(50)=8.7 uM for alpha-3/beta-4) and muscular (IC(50)=0.54 uM for alpha-1-beta-1-epsilon-delta (CHRNA1-CHRNB1-CHRND-CHRNE)) subtypes) and the voltage-gated potassium channel Kv1.6/KCNA6 subtype (IC(50)=1.59 uM). The chain is Alpha/kappa-conotoxin pl14a from Conus planorbis (Planorbis cone).